The primary structure comprises 330 residues: Ribosomal RNA small subunit methyltransferase H (330 aa).

S-adenosyl-L-methionine contacts are provided by residues glycine 40 to tyrosine 42, aspartate 58, phenylalanine 85, aspartate 101, and glutamine 108.

This sequence belongs to the methyltransferase superfamily. RsmH family.

It is found in the cytoplasm. It catalyses the reaction cytidine(1402) in 16S rRNA + S-adenosyl-L-methionine = N(4)-methylcytidine(1402) in 16S rRNA + S-adenosyl-L-homocysteine + H(+). Functionally, specifically methylates the N4 position of cytidine in position 1402 (C1402) of 16S rRNA. The polypeptide is Ribosomal RNA small subunit methyltransferase H (Roseobacter denitrificans (strain ATCC 33942 / OCh 114) (Erythrobacter sp. (strain OCh 114))).